Consider the following 163-residue polypeptide: Mediator of RNA polymerase II transcription subunit 10 (163 aa).

Residues 57 to 79 are disordered; sequence AAPDPSYVQSPPSRTGLSPADPP. Positions 63 to 72 are enriched in polar residues; sequence YVQSPPSRTG.

The protein belongs to the Mediator complex subunit 10 family. In terms of assembly, component of the Mediator complex.

It localises to the nucleus. Its function is as follows. Component of the Mediator complex, a coactivator involved in the regulated transcription of nearly all RNA polymerase II-dependent genes. Mediator functions as a bridge to convey information from gene-specific regulatory proteins to the basal RNA polymerase II transcription machinery. Mediator is recruited to promoters by direct interactions with regulatory proteins and serves as a scaffold for the assembly of a functional preinitiation complex with RNA polymerase II and the general transcription factors. This chain is Mediator of RNA polymerase II transcription subunit 10 (NUT2), found in Coccidioides immitis (strain RS) (Valley fever fungus).